We begin with the raw amino-acid sequence, 370 residues long: Coproporphyrin III ferrochelatase (370 aa).

Residues S58 and Y127 each coordinate Fe-coproporphyrin III. Residues H189 and E276 each coordinate Fe(2+).

Belongs to the ferrochelatase family.

It is found in the cytoplasm. It carries out the reaction Fe-coproporphyrin III + 2 H(+) = coproporphyrin III + Fe(2+). Its pathway is porphyrin-containing compound metabolism; protoheme biosynthesis. Involved in coproporphyrin-dependent heme b biosynthesis. Catalyzes the insertion of ferrous iron into coproporphyrin III to form Fe-coproporphyrin III. This chain is Coproporphyrin III ferrochelatase, found in Corynebacterium glutamicum (strain ATCC 13032 / DSM 20300 / JCM 1318 / BCRC 11384 / CCUG 27702 / LMG 3730 / NBRC 12168 / NCIMB 10025 / NRRL B-2784 / 534).